The sequence spans 294 residues: Phosphate acetyltransferase (294 aa).

Belongs to the phosphate acetyltransferase and butyryltransferase family. As to quaternary structure, homotetramer.

The protein resides in the cytoplasm. It catalyses the reaction acetyl-CoA + phosphate = acetyl phosphate + CoA. The protein operates within metabolic intermediate biosynthesis; acetyl-CoA biosynthesis; acetyl-CoA from acetate: step 2/2. Its function is as follows. In addition to acetyl-CoA (100%), the enzyme accepts propionyl-CoA (60%) and butyryl-CoA (30%). This Thermotoga maritima (strain ATCC 43589 / DSM 3109 / JCM 10099 / NBRC 100826 / MSB8) protein is Phosphate acetyltransferase (pta).